We begin with the raw amino-acid sequence, 2528 residues long: Reducing polyketide synthase PKS1 (2528 aa).

The Ketosynthase family 3 (KS3) domain occupies 11-436 (ITPIAVVGMS…GANVHAILES (426 aa)). Residues Cys186, His321, and His359 each act as for beta-ketoacyl synthase activity in the active site. The interval 573-868 (FVFTGQGAQW…LGGPISQVID (296 aa)) is malonyl-CoA:ACP transacylase (MAT). The N-terminal hotdog fold stretch occupies residues 954 to 1092 (LDLIGVFDVH…GLISVLKSSK (139 aa)). The PKS/mFAS DH domain maps to 954 to 1278 (LDLIGVFDVH…LVALDRPNSS (325 aa)). Positions 956 to 1277 (LIGVFDVHSS…TLVALDRPNS (322 aa)) are dehydratase (DH) domain. His986 serves as the catalytic Proton acceptor; for dehydratase activity. The C-terminal hotdog fold stretch occupies residues 1122 to 1278 (KTEWDVKDMY…LVALDRPNSS (157 aa)). Residue Asp1187 is the Proton donor; for dehydratase activity of the active site. Positions 1827-2139 (GLLDSLHFTV…TGRHMGKMVA (313 aa)) are enoyl reductase (ER) domain. Positions 2164–2341 (ASYLLVGGVG…ATVIDIGAVH (178 aa)) are ketoreductase (KR) domain. The Carrier domain maps to 2442–2519 (SAVTIVLSAL…ALAVKIAARS (78 aa)). Ser2479 carries the O-(pantetheine 4'-phosphoryl)serine modification.

Its pathway is mycotoxin biosynthesis. Reducing polyketide synthase (PKS); part of the Tox1A locus, one of the 2 loci that mediate the biosynthesis of T-toxin, a family of linear polyketides 37 to 45 carbons in length, of which the major component is 41 carbons, and which leads to high virulence to maize. One of the PKSs (PKS1 or PKS2) could synthesize a precursor, used subsequently by the other PKS as starter unit, to add additional carbons. Variability in the length of the final carbon backbone C35-47 could be achieved by varying the number of condensation cycles, or use of different starter or extender units or might be due to decarboxylation of the penultimate product, catalyzed by DEC1. Additional proteins are required for the biosynthesis of T-toxin, including oxidoreductases RED1, RED2, RED3, LAM1 and OXI1, as well as esterase TOX9. This Cochliobolus heterostrophus (strain C4 / ATCC 48331 / race T) (Southern corn leaf blight fungus) protein is Reducing polyketide synthase PKS1.